Here is a 1231-residue protein sequence, read N- to C-terminus: Pesticidal crystal protein Cry1Bd (1231 aa).

This sequence belongs to the delta endotoxin family.

Functionally, promotes colloidosmotic lysis by binding to the midgut epithelial cells of lepidopteran larvae. Toxic to Plutella xylostella. This chain is Pesticidal crystal protein Cry1Bd (cry1Bd), found in Bacillus thuringiensis subsp. wuhanensis.